A 441-amino-acid polypeptide reads, in one-letter code: ATP-dependent protease ATPase subunit HslU (441 aa).

Residues V18, 60 to 65 (GVGKTE), D254, E319, and R391 each bind ATP.

Belongs to the ClpX chaperone family. HslU subfamily. In terms of assembly, a double ring-shaped homohexamer of HslV is capped on each side by a ring-shaped HslU homohexamer. The assembly of the HslU/HslV complex is dependent on binding of ATP.

Its subcellular location is the cytoplasm. ATPase subunit of a proteasome-like degradation complex; this subunit has chaperone activity. The binding of ATP and its subsequent hydrolysis by HslU are essential for unfolding of protein substrates subsequently hydrolyzed by HslV. HslU recognizes the N-terminal part of its protein substrates and unfolds these before they are guided to HslV for hydrolysis. This is ATP-dependent protease ATPase subunit HslU from Verminephrobacter eiseniae (strain EF01-2).